Consider the following 463-residue polypeptide: Fumarate hydratase class II (463 aa).

Substrate is bound by residues 97–99 (SGT), 128–131 (HPND), 138–140 (SSN), and T186. H187 (proton donor/acceptor) is an active-site residue. Residue S317 is part of the active site. Residues S318 and 323 to 325 (KVN) each bind substrate.

This sequence belongs to the class-II fumarase/aspartase family. Fumarase subfamily. As to quaternary structure, homotetramer.

It is found in the cytoplasm. It catalyses the reaction (S)-malate = fumarate + H2O. It functions in the pathway carbohydrate metabolism; tricarboxylic acid cycle; (S)-malate from fumarate: step 1/1. Its function is as follows. Involved in the TCA cycle. Catalyzes the stereospecific interconversion of fumarate to L-malate. In Helicobacter pylori (strain J99 / ATCC 700824) (Campylobacter pylori J99), this protein is Fumarate hydratase class II.